We begin with the raw amino-acid sequence, 249 residues long: NAD-dependent protein deacylase 2 (249 aa).

The 240-residue stretch at 1–240 (MNVADLLASS…PRLVEEVKRR (240 aa)) folds into the Deacetylase sirtuin-type domain. NAD(+) is bound at residue 18–37 (GAGISAESGVPTFRGPGGLW). Residues Tyr62 and Arg65 each coordinate substrate. 96–99 (QNVD) is a binding site for NAD(+). The Proton acceptor role is filled by His114. Residues Cys122, Cys125, Cys142, and Cys145 each coordinate Zn(2+). Residues 182 to 184 (GTS), 208 to 210 (NVE), and Ala226 each bind NAD(+).

Belongs to the sirtuin family. Class III subfamily. It depends on Zn(2+) as a cofactor.

The protein resides in the cytoplasm. It catalyses the reaction N(6)-acetyl-L-lysyl-[protein] + NAD(+) + H2O = 2''-O-acetyl-ADP-D-ribose + nicotinamide + L-lysyl-[protein]. The enzyme catalyses N(6)-succinyl-L-lysyl-[protein] + NAD(+) + H2O = 2''-O-succinyl-ADP-D-ribose + nicotinamide + L-lysyl-[protein]. In terms of biological role, NAD-dependent lysine deacetylase and desuccinylase that specifically removes acetyl and succinyl groups on target proteins. Modulates the activities of several proteins which are inactive in their acylated form. Deacetylates the N-terminal lysine residue of Alba, the major archaeal chromatin protein and that, in turn, increases Alba's DNA binding affinity, thereby repressing transcription. The protein is NAD-dependent protein deacylase 2 of Pyrobaculum aerophilum (strain ATCC 51768 / DSM 7523 / JCM 9630 / CIP 104966 / NBRC 100827 / IM2).